Here is a 491-residue protein sequence, read N- to C-terminus: ENTVSHEVQRLTVTDLDAPNSPAWRATYRIVGGDNGDHFTITTDPESNQGILTTQKGLDFEAKTQHTLYVEVINEVPFVVKLPTSTATVVVLVEDVNEPPVFVPPSKVIEIQEGISTGEPICAYTARDPDKGSQKISYHILRDPAGWLAMDPDSGQVTAAGVLDREDEQFVRNNIYEVMVLATDDGSPPTTGTGTLLLTLMDINDHGPVPEPRQITICNQSPVPQVLNITDKDLSPHTAPFQAQLTHDSDVYWTAEVNEKGDAVALSLKKFLKQGEYDVHLSLSDHGNKEQLTVIRATVCDCHGNMVTCRDPWTWGFLLPILGAALALLLLLLVLLFLVRKKRKIKEPLLLPEDDTRDNVFYYGEEGGGEEDQDYDITQLHRGLEARPEVVLRNDVAPSFIPTPMYRPRPANPDEIGNFIIENLKAANTDPTAPPYDSLLVFDYEGSGSDAASLSSLTSSTSDQDQDYNYLNEWGSRFKKLADMYGGGQDD.

Cadherin domains are found at residues 1 to 102 (ENTV…PPVF), 103 to 208 (VPPS…DHGP), and 209 to 314 (VPEP…DPWT). Residues 1–316 (ENTVSHEVQR…VTCRDPWTWG (316 aa)) are Extracellular-facing. Asn228 is a glycosylation site (N-linked (GlcNAc...) asparagine). Residues 317 to 339 (FLLPILGAALALLLLLLVLLFLV) form a helical membrane-spanning segment. Over 340 to 491 (RKKRKIKEPL…ADMYGGGQDD (152 aa)) the chain is Cytoplasmic.

Interacts with CDCP1 and CTNNB1.

The protein resides in the cell membrane. Functionally, cadherins are calcium-dependent cell adhesion proteins. They preferentially interact with themselves in a homophilic manner in connecting cells; cadherins may thus contribute to the sorting of heterogeneous cell types. In Bos taurus (Bovine), this protein is Cadherin-3 (CDH3).